The following is a 612-amino-acid chain: Cyclin-dependent kinase 8 (612 aa).

The Protein kinase domain occupies 23-345 (FENSKEIGRG…CEEAMNDIYF (323 aa)). Residues 29–37 (IGRGTYGLV) and Lys-57 contribute to the ATP site. The active-site Proton acceptor is the Asp-155. Composition is skewed to low complexity over residues 403–455 (QQQM…MGQP), 472–483 (HQMMQQQHQSQH), 543–555 (PQPG…QQRP), 564–573 (QGYMNPQMGM), and 600–612 (NPQQ…QYHR). Disordered stretches follow at residues 403–483 (QQQM…QSQH) and 543–612 (PQPG…QYHR).

The protein belongs to the protein kinase superfamily. CMGC Ser/Thr protein kinase family. CDC2/CDKX subfamily. Component of the Mediator complex. It depends on Mg(2+) as a cofactor.

It localises to the nucleus. It carries out the reaction L-seryl-[protein] + ATP = O-phospho-L-seryl-[protein] + ADP + H(+). The enzyme catalyses L-threonyl-[protein] + ATP = O-phospho-L-threonyl-[protein] + ADP + H(+). It catalyses the reaction [DNA-directed RNA polymerase] + ATP = phospho-[DNA-directed RNA polymerase] + ADP + H(+). Its function is as follows. Component of the Mediator complex, a coactivator involved in regulated gene transcription of nearly all RNA polymerase II-dependent genes. Mediator functions as a bridge to convey information from gene-specific regulatory proteins to the basal RNA polymerase II transcription machinery. Mediator is recruited to promoters by direct interactions with regulatory proteins and serves as a scaffold for the assembly of a functional pre-initiation complex with RNA polymerase II and the general transcription factors. Phosphorylates the CTD (C-terminal domain) of the large subunit of RNA polymerase II (RNAp II), which may inhibit the formation of a transcription initiation complex. The polypeptide is Cyclin-dependent kinase 8 (cdk-8) (Caenorhabditis briggsae).